The chain runs to 245 residues: Ribonuclease PH (245 aa).

Residues arginine 86 and 124–126 (GTR) each bind phosphate.

It belongs to the RNase PH family. In terms of assembly, homohexameric ring arranged as a trimer of dimers.

It catalyses the reaction tRNA(n+1) + phosphate = tRNA(n) + a ribonucleoside 5'-diphosphate. Its function is as follows. Phosphorolytic 3'-5' exoribonuclease that plays an important role in tRNA 3'-end maturation. Removes nucleotide residues following the 3'-CCA terminus of tRNAs; can also add nucleotides to the ends of RNA molecules by using nucleoside diphosphates as substrates, but this may not be physiologically important. Probably plays a role in initiation of 16S rRNA degradation (leading to ribosome degradation) during starvation. The sequence is that of Ribonuclease PH from Bacillus velezensis (strain DSM 23117 / BGSC 10A6 / LMG 26770 / FZB42) (Bacillus amyloliquefaciens subsp. plantarum).